Consider the following 119-residue polypeptide: Protein TusC (119 aa).

This sequence belongs to the DsrF/TusC family. In terms of assembly, heterohexamer, formed by a dimer of trimers. The hexameric TusBCD complex contains 2 copies each of TusB, TusC and TusD. The TusBCD complex interacts with TusE.

The protein localises to the cytoplasm. In terms of biological role, part of a sulfur-relay system required for 2-thiolation of 5-methylaminomethyl-2-thiouridine (mnm(5)s(2)U) at tRNA wobble positions. The polypeptide is Protein TusC (Klebsiella pneumoniae subsp. pneumoniae (strain ATCC 700721 / MGH 78578)).